The chain runs to 1025 residues: Multidrug resistance protein MdtC (1025 aa).

Helical transmembrane passes span 15-35 (ILIS…LPVA), 333-353 (EVEQ…FLFL), 360-380 (LIPA…MYLC), 387-407 (LSLM…IVVL), 431-451 (VGFT…PLLL), 469-489 (VAIG…CGWL), 528-548 (LTGL…ISIP), 851-871 (AQVI…GVLY), 875-895 (VHPL…LLAL), 897-917 (IFDA…IGIV), 953-973 (PIMM…LSGG), and 984-1004 (ITIV…TPVV).

Belongs to the resistance-nodulation-cell division (RND) (TC 2.A.6) family. MdtC subfamily. In terms of assembly, part of a tripartite efflux system composed of MdtA, MdtB and MdtC. MdtC forms a heteromultimer with MdtB.

The protein localises to the cell inner membrane. The protein is Multidrug resistance protein MdtC of Klebsiella pneumoniae subsp. pneumoniae (strain ATCC 700721 / MGH 78578).